Reading from the N-terminus, the 1643-residue chain is Outer membrane protein B (1643 aa).

A propeptide spanning residues 1329–1352 is cleaved from the precursor; the sequence is GTLRYLSNAETSDVAGSATGAVSS. Positions 1355 to 1643 constitute an Autotransporter domain; it reads EAEVSYGVWA…QGTLKVRVNF (289 aa).

Belongs to the rickettsiae OmpA/OmpB family.

The protein resides in the periplasm. The protein localises to the secreted. It is found in the cell surface. It localises to the cell outer membrane. In terms of biological role, the 120 kDa surface-exposed protein is a major structural protein which may play a role as a rickettsial virulence factor and/or immunogen during infection. Functionally, the 32 kDa beta peptide may serve as a membrane anchor. It has been shown to adhere to biotinylated Vero cell proteins. This Rickettsia prowazekii (strain Madrid E) protein is Outer membrane protein B (ompB).